Here is a 672-residue protein sequence, read N- to C-terminus: Outer dynein arm-docking complex subunit 4 (672 aa).

TPR repeat units lie at residues 13–46, 48–80, 81–114, 275–311, 320–353, 360–393, 397–430, and 437–470; these read FPSY…QDGD, NCLV…DPAF, CKGI…RPDR, LKSL…NKEE, GNLY…AKEY, SRAL…AKTT, TWLF…AEEE, and LNAS…AKLV. Residues 527-544 show a composition bias toward basic and acidic residues; sequence RVRDEPEKVVKQWDHSED. Positions 527–672 are disordered; that stretch reads RVRDEPEKVV…TGNEMEKEYE (146 aa). Residues 545–555 are compositionally biased toward acidic residues; it reads EKETDEDDEAF. Composition is skewed to basic and acidic residues over residues 595–650 and 658–672; these read ETGR…EELG and GETK…KEYE.

As to quaternary structure, component of the outer dynein arm-docking complex along with ODAD1, ODAD2 and ODAD3. Interacts with ODAD1; this interaction may facilitate the recruitment and/or attachment of outer dynein arm docking complex proteins, including ODAD1, ODAD3 and ODAD2, to ciliary axonemes. Interacts with components of the IFT complex A, including IFT140, TTC21B/IFT139 and WDR19/IFT144, and the IFT complex B, including IFT46, IFT52 and IFT57. Interacts with CFAP53. As to expression, expressed in the nasal mucosa (at protein level).

It is found in the cytoplasm. It localises to the cytoskeleton. The protein resides in the cilium axoneme. Its function is as follows. Component of the outer dynein arm-docking complex (ODA-DC) that mediates outer dynein arms (ODA) binding onto the doublet microtubule. Plays an essential role for the assembly of ODA-DC and for the docking of ODA in ciliary axoneme. The chain is Outer dynein arm-docking complex subunit 4 from Homo sapiens (Human).